Reading from the N-terminus, the 211-residue chain is Putative transposase for insertion sequence element IS402 (211 aa).

Residues Arg-51–Lys-71 form a disordered region.

The protein belongs to the transposase 11 family.

Functionally, involved in the transposition of the insertion sequence. This is Putative transposase for insertion sequence element IS402 from Burkholderia cepacia (Pseudomonas cepacia).